A 390-amino-acid chain; its full sequence is Mannitol-1-phosphate 5-dehydrogenase (390 aa).

7–18 (AVHFGGGNIGRG) lines the NAD(+) pocket. Residue lysine 216 is part of the active site.

Belongs to the mannitol dehydrogenase family. As to quaternary structure, monomer.

It carries out the reaction D-mannitol 1-phosphate + NAD(+) = beta-D-fructose 6-phosphate + NADH + H(+). Functionally, catalyzes the NAD(H)-dependent interconversion of D-fructose 6-phosphate and D-mannitol 1-phosphate in the mannitol metabolic pathway. Has a strong preference for NADH over NADPH. This Alternaria alternata (Alternaria rot fungus) protein is Mannitol-1-phosphate 5-dehydrogenase.